The sequence spans 231 residues: Phosphatidylserine decarboxylase proenzyme (231 aa).

Residue Ser188 is the Schiff-base intermediate with substrate; via pyruvic acid of the active site. Ser188 is subject to Pyruvic acid (Ser); by autocatalysis.

This sequence belongs to the phosphatidylserine decarboxylase family. PSD-A subfamily. In terms of assembly, heterodimer of a large membrane-associated beta subunit and a small pyruvoyl-containing alpha subunit. The cofactor is pyruvate. Is synthesized initially as an inactive proenzyme. Formation of the active enzyme involves a self-maturation process in which the active site pyruvoyl group is generated from an internal serine residue via an autocatalytic post-translational modification. Two non-identical subunits are generated from the proenzyme in this reaction, and the pyruvate is formed at the N-terminus of the alpha chain, which is derived from the carboxyl end of the proenzyme. The post-translation cleavage follows an unusual pathway, termed non-hydrolytic serinolysis, in which the side chain hydroxyl group of the serine supplies its oxygen atom to form the C-terminus of the beta chain, while the remainder of the serine residue undergoes an oxidative deamination to produce ammonia and the pyruvoyl prosthetic group on the alpha chain.

It is found in the cell membrane. It catalyses the reaction a 1,2-diacyl-sn-glycero-3-phospho-L-serine + H(+) = a 1,2-diacyl-sn-glycero-3-phosphoethanolamine + CO2. It functions in the pathway phospholipid metabolism; phosphatidylethanolamine biosynthesis; phosphatidylethanolamine from CDP-diacylglycerol: step 2/2. Its function is as follows. Catalyzes the formation of phosphatidylethanolamine (PtdEtn) from phosphatidylserine (PtdSer). This Rickettsia felis (strain ATCC VR-1525 / URRWXCal2) (Rickettsia azadi) protein is Phosphatidylserine decarboxylase proenzyme.